The primary structure comprises 602 residues: SAGA complex subunit SPT8 (602 aa).

Residues 1 to 141 (MDEVDDILIN…REASSSTHEA (141 aa)) form a disordered region. Acidic residues-rich tracts occupy residues 14–23 (VDDEEDDEEM) and 36–75 (EGNDDGGEDEEDDDDDDEDDDDDEDEREDDDEQEDDDGED). At threonine 85 the chain carries Phosphothreonine. Phosphoserine occurs at positions 108, 123, and 131. 2 WD repeats span residues 173–212 (PIQTHVNALAVSRGLKYLFLGGSDGYIRKYDLLNTLEGKL) and 305–346 (GHTQ…NEFK). A disordered region spans residues 366–418 (VSGNVNSGKENENADDDMDSLFGDEDEDEKQDAGNEPVETGDGSNGEENKEQI). The span at 378–395 (NADDDMDSLFGDEDEDEK) shows a compositional bias: acidic residues. 3 WD repeats span residues 415-454 (KEQISEESLNIVYDESVFMTSGLNGSVHIWDRRMTQSPAL), 506-544 (SISGPVSCVKAMPNNKHLLCASRDNIRLYNVEIAVDASN), and 560-600 (HHGG…YDID). Serine 451 bears the Phosphoserine mark.

Belongs to the WD repeat SPT8 family. Component of the 1.8 MDa SAGA (Spt-Ada-Gcn5 acetyltransferase) complex, which is composed of 19 subunits TRA1, SPT7, TAF5, NGG1/ADA3, SGF73, SPT20/ADA5, SPT8, TAF12, TAF6, HFI1/ADA1, UBP8, GCN5, ADA2, SPT3, SGF29, TAF10, TAF9, SGF11 and SUS1. The SAGA complex is composed of 4 modules, namely the HAT (histone acetyltransferase) module (GCN5, ADA2, NGG1/ADA3 and SGF29), the DUB (deubiquitinating) module (UBP8, SGF11, SGF73 and SUS1), the core or TAF (TBP-associated factor) module (TAF5, TAF6, TAF9, TAF10 and TAF12), and the Tra1 or SPT (Suppressor of Ty) module (TRA1, HFI1/ADA1, SPT3, SPT7, SPT8 and SPT20/ADA5). The Tra1/SPT module binds activators, the core module recruits TBP (TATA-binding protein), the HAT module contains the histone H3 acetyltransferase GCN5, and the DUB module comprises the histone H2B deubiquitinase UBP8.

The protein localises to the nucleus. Component of the transcription coactivator SAGA complex. SAGA acts as a general cofactor required for essentially all RNA polymerase II transcription. At the promoters, SAGA is required for transcription pre-initiation complex (PIC) recruitment. It influences RNA polymerase II transcriptional activity through different activities such as TBP interaction (via core/TAF module) and promoter selectivity, interaction with transcription activators (via Tra1/SPT module), and chromatin modification through histone acetylation (via HAT module) and deubiquitination (via DUB module). SAGA preferentially acetylates histones H3 (to form H3K9ac, H3K14ac, H3K18ac and H3K23ac) and H2B and deubiquitinates histone H2B. SAGA interacts with DNA via upstream activating sequences (UASs). During SAGA-mediated transcriptional inhibition, SPT3 and SPT8 prevent binding of TBP to the TATA box. This is SAGA complex subunit SPT8 (SPT8) from Saccharomyces cerevisiae (strain ATCC 204508 / S288c) (Baker's yeast).